Here is a 162-residue protein sequence, read N- to C-terminus: ATP synthase subunit b (162 aa).

A helical transmembrane segment spans residues 6 to 26 (PDIGLLFWMLLSFGIVFFVAA).

The protein belongs to the ATPase B chain family. In terms of assembly, F-type ATPases have 2 components, F(1) - the catalytic core - and F(0) - the membrane proton channel. F(1) has five subunits: alpha(3), beta(3), gamma(1), delta(1), epsilon(1). F(0) has three main subunits: a(1), b(2) and c(10-14). The alpha and beta chains form an alternating ring which encloses part of the gamma chain. F(1) is attached to F(0) by a central stalk formed by the gamma and epsilon chains, while a peripheral stalk is formed by the delta and b chains.

It localises to the cell inner membrane. Functionally, f(1)F(0) ATP synthase produces ATP from ADP in the presence of a proton or sodium gradient. F-type ATPases consist of two structural domains, F(1) containing the extramembraneous catalytic core and F(0) containing the membrane proton channel, linked together by a central stalk and a peripheral stalk. During catalysis, ATP synthesis in the catalytic domain of F(1) is coupled via a rotary mechanism of the central stalk subunits to proton translocation. Component of the F(0) channel, it forms part of the peripheral stalk, linking F(1) to F(0). The polypeptide is ATP synthase subunit b (Azobacteroides pseudotrichonymphae genomovar. CFP2).